Consider the following 762-residue polypeptide: Phospholipase D alpha 4 (762 aa).

One can recognise a C2 domain in the interval 1-116 (MELEEQKKYF…VINGFFPLIA (116 aa)). Asp-172 contacts Ca(2+). One can recognise a PLD phosphodiesterase 1 domain in the interval 301–339 (TAFAHHQKTITLDTRVTNSSTKEREIMSFLGGFDLCDGR). Active-site residues include His-306, Lys-308, and Asp-313. His-306 lines the a 1,2-diacyl-sn-glycero-3-phosphate pocket. The Ca(2+) site is built by His-345 and His-377. Residues Gln-477 and His-615 each coordinate a 1,2-diacyl-sn-glycero-3-phosphate. The region spanning 610–637 (FMVYVHSKLMIVDDTYILIGSANINQRS) is the PLD phosphodiesterase 2 domain. Catalysis depends on residues His-615, Lys-617, and Asp-622. Glu-671 serves as a coordination point for Ca(2+).

This sequence belongs to the phospholipase D family. C2-PLD subfamily. The cofactor is Ca(2+). Expressed in roots, leaves, stems, siliques,flowers and inflorescences.

It is found in the cell membrane. It carries out the reaction a 1,2-diacyl-sn-glycero-3-phosphocholine + H2O = a 1,2-diacyl-sn-glycero-3-phosphate + choline + H(+). Functionally, hydrolyzes glycerol-phospholipids at the terminal phosphodiesteric bond to generate phosphatidic acids (PA). Promotes growth and plays a role in nitrogen signaling. This is Phospholipase D alpha 4 from Arabidopsis thaliana (Mouse-ear cress).